Here is a 93-residue protein sequence, read N- to C-terminus: YcgL domain-containing protein AHA_2135 (93 aa).

The YcgL domain occupies 1 to 85; sequence MLCAVYKSRK…PPENLLEQHK (85 aa).

The sequence is that of YcgL domain-containing protein AHA_2135 from Aeromonas hydrophila subsp. hydrophila (strain ATCC 7966 / DSM 30187 / BCRC 13018 / CCUG 14551 / JCM 1027 / KCTC 2358 / NCIMB 9240 / NCTC 8049).